A 465-amino-acid chain; its full sequence is Ribulose bisphosphate carboxylase large chain (465 aa).

Position 4 is an N6,N6,N6-trimethyllysine (K4). Residues N113 and T163 each contribute to the substrate site. K165 serves as the catalytic Proton acceptor. K167 contributes to the substrate binding site. Mg(2+)-binding residues include K191, D193, and E194. K191 is subject to N6-carboxylysine. H284 acts as the Proton acceptor in catalysis. Residues R285, H317, and S369 each contribute to the substrate site.

The protein belongs to the RuBisCO large chain family. Type I subfamily. In terms of assembly, heterohexadecamer of 8 large chains and 8 small chains; disulfide-linked. The disulfide link is formed within the large subunit homodimers. The cofactor is Mg(2+). In terms of processing, the disulfide bond which can form in the large chain dimeric partners within the hexadecamer appears to be associated with oxidative stress and protein turnover.

It is found in the plastid. The protein localises to the chloroplast. It catalyses the reaction 2 (2R)-3-phosphoglycerate + 2 H(+) = D-ribulose 1,5-bisphosphate + CO2 + H2O. It carries out the reaction D-ribulose 1,5-bisphosphate + O2 = 2-phosphoglycolate + (2R)-3-phosphoglycerate + 2 H(+). Functionally, ruBisCO catalyzes two reactions: the carboxylation of D-ribulose 1,5-bisphosphate, the primary event in carbon dioxide fixation, as well as the oxidative fragmentation of the pentose substrate in the photorespiration process. Both reactions occur simultaneously and in competition at the same active site. The chain is Ribulose bisphosphate carboxylase large chain from Clitoria ternatea (Butterfly pea).